Here is a 503-residue protein sequence, read N- to C-terminus: Na(+)-translocating NADH-quinone reductase subunit B (503 aa).

5 helical membrane passes run 55–75 (MMLVVIALFPATFLAIWNSGV), 94–114 (ISGFRSYLSFIFNDIGVFSIL), 120–140 (IFLPLLIISYSVGGVCEVLFA), 161–181 (TLPPTIPYWMAALGIAFGVVV), and 186–206 (FGGTGMNILNPALSGRAFLFF). T248 is subject to FMN phosphoryl threonine. 5 helical membrane passes run 361–381 (TSTFACLLGAIFLVVTGIASW), 387–407 (FGIGAFITAWLFKIFSILIVG), 417–437 (FFIPAYRQLFLGGLGFGLVFM), 452–472 (WIYGLFIGFMTIVIRLINPAY), and 475–495 (GVMLAILLGNVFAPLLDYFAV).

Belongs to the NqrB/RnfD family. In terms of assembly, composed of six subunits; NqrA, NqrB, NqrC, NqrD, NqrE and NqrF. It depends on FMN as a cofactor.

It is found in the cell inner membrane. It catalyses the reaction a ubiquinone + n Na(+)(in) + NADH + H(+) = a ubiquinol + n Na(+)(out) + NAD(+). NQR complex catalyzes the reduction of ubiquinone-1 to ubiquinol by two successive reactions, coupled with the transport of Na(+) ions from the cytoplasm to the periplasm. NqrA to NqrE are probably involved in the second step, the conversion of ubisemiquinone to ubiquinol. This is Na(+)-translocating NADH-quinone reductase subunit B from Chlamydia caviae (strain ATCC VR-813 / DSM 19441 / 03DC25 / GPIC) (Chlamydophila caviae).